The chain runs to 196 residues: ATP-dependent Clp protease proteolytic subunit (196 aa).

Serine 96 (nucleophile) is an active-site residue. Histidine 121 is a catalytic residue.

The protein belongs to the peptidase S14 family. As to quaternary structure, fourteen ClpP subunits assemble into 2 heptameric rings which stack back to back to give a disk-like structure with a central cavity, resembling the structure of eukaryotic proteasomes.

It localises to the cytoplasm. It carries out the reaction Hydrolysis of proteins to small peptides in the presence of ATP and magnesium. alpha-casein is the usual test substrate. In the absence of ATP, only oligopeptides shorter than five residues are hydrolyzed (such as succinyl-Leu-Tyr-|-NHMec, and Leu-Tyr-Leu-|-Tyr-Trp, in which cleavage of the -Tyr-|-Leu- and -Tyr-|-Trp bonds also occurs).. Cleaves peptides in various proteins in a process that requires ATP hydrolysis. Has a chymotrypsin-like activity. Plays a major role in the degradation of misfolded proteins. This chain is ATP-dependent Clp protease proteolytic subunit, found in Streptococcus agalactiae serotype III (strain NEM316).